The sequence spans 350 residues: Thymidine kinase (350 aa).

Residue 17–24 coordinates ATP; it reads GPFGIGKT. E45 functions as the Proton acceptor in the catalytic mechanism. Q86 contributes to the substrate binding site. R176 contacts ATP. R182 is a substrate binding site.

This sequence belongs to the herpesviridae thymidine kinase family. As to quaternary structure, homodimer.

The enzyme catalyses thymidine + ATP = dTMP + ADP + H(+). Its function is as follows. Catalyzes the transfer of the gamma-phospho group of ATP to thymidine to generate dTMP in the salvage pathway of pyrimidine synthesis. The dTMP serves as a substrate for DNA polymerase during viral DNA replication. Allows the virus to be reactivated and to grow in non-proliferative cells lacking a high concentration of phosphorylated nucleic acid precursors. In Gallus gallus (Chicken), this protein is Thymidine kinase.